The chain runs to 90 residues: U7-theraphotoxin-Hhn1g (90 aa).

Positions 1 to 19 are cleaved as a signal peptide; it reads MKTAIFTVVLALAVFAVLS. Residues 20 to 50 constitute a propeptide that is removed on maturation; that stretch reads FGWEANEKALSEEFTELIHEKEAASETEARE. Disulfide bonds link Cys-51–Cys-65, Cys-58–Cys-70, and Cys-64–Cys-81.

Belongs to the neurotoxin 10 (Hwtx-1) family. 13 (Hntx-13) subfamily. Expressed by the venom gland.

The protein localises to the secreted. Ion channel inhibitor. The chain is U7-theraphotoxin-Hhn1g from Cyriopagopus hainanus (Chinese bird spider).